The chain runs to 365 residues: Peptide chain release factor 2 (365 aa).

Residue Gln-252 is modified to N5-methylglutamine.

Belongs to the prokaryotic/mitochondrial release factor family. In terms of processing, methylated by PrmC. Methylation increases the termination efficiency of RF2.

It localises to the cytoplasm. Its function is as follows. Peptide chain release factor 2 directs the termination of translation in response to the peptide chain termination codons UGA and UAA. The sequence is that of Peptide chain release factor 2 from Acidithiobacillus ferrooxidans (strain ATCC 23270 / DSM 14882 / CIP 104768 / NCIMB 8455) (Ferrobacillus ferrooxidans (strain ATCC 23270)).